The primary structure comprises 328 residues: uncharacterized protein (328 aa).

In terms of domain architecture, Bro-N spans 3–126 (RVKIGEFKFG…EVIPQVLCTG (124 aa)).

This is an uncharacterized protein from Autographa californica nuclear polyhedrosis virus (AcMNPV).